The following is a 401-amino-acid chain: L-rhamnonate dehydratase (401 aa).

Substrate-binding residues include histidine 29 and arginine 55. Mg(2+)-binding residues include aspartate 222, glutamate 248, and glutamate 276. Residue histidine 325 is the Proton acceptor of the active site. Residue glutamate 345 coordinates substrate.

It belongs to the mandelate racemase/muconate lactonizing enzyme family. RhamD subfamily. In terms of assembly, homooctamer; tetramer of dimers. Mg(2+) is required as a cofactor.

It carries out the reaction L-rhamnonate = 2-dehydro-3-deoxy-L-rhamnonate + H2O. Functionally, catalyzes the dehydration of L-rhamnonate to 2-keto-3-deoxy-L-rhamnonate (KDR). In Escherichia coli O157:H7, this protein is L-rhamnonate dehydratase.